The primary structure comprises 327 residues: Lipoyl synthase (327 aa).

The [4Fe-4S] cluster site is built by Cys-66, Cys-71, Cys-77, Cys-92, Cys-96, Cys-99, and Ser-306. One can recognise a Radical SAM core domain in the interval 78–295 (FSKGTATFMI…EKEAYELGFT (218 aa)).

This sequence belongs to the radical SAM superfamily. Lipoyl synthase family. The cofactor is [4Fe-4S] cluster.

It localises to the cytoplasm. It carries out the reaction [[Fe-S] cluster scaffold protein carrying a second [4Fe-4S](2+) cluster] + N(6)-octanoyl-L-lysyl-[protein] + 2 oxidized [2Fe-2S]-[ferredoxin] + 2 S-adenosyl-L-methionine + 4 H(+) = [[Fe-S] cluster scaffold protein] + N(6)-[(R)-dihydrolipoyl]-L-lysyl-[protein] + 4 Fe(3+) + 2 hydrogen sulfide + 2 5'-deoxyadenosine + 2 L-methionine + 2 reduced [2Fe-2S]-[ferredoxin]. It functions in the pathway protein modification; protein lipoylation via endogenous pathway; protein N(6)-(lipoyl)lysine from octanoyl-[acyl-carrier-protein]: step 2/2. Functionally, catalyzes the radical-mediated insertion of two sulfur atoms into the C-6 and C-8 positions of the octanoyl moiety bound to the lipoyl domains of lipoate-dependent enzymes, thereby converting the octanoylated domains into lipoylated derivatives. The chain is Lipoyl synthase from Neisseria gonorrhoeae (strain ATCC 700825 / FA 1090).